Consider the following 147-residue polypeptide: Secreted hemophore CSA2 (147 aa).

A signal peptide spans 1–20 (MKFSTILAIPFAIAFANAAA). In terms of domain architecture, CFEM spans 34 to 145 (NPYTIYPPVP…SALDAAATAT (112 aa)). 4 disulfide bridges follow: Cys-62-Cys-102, Cys-66-Cys-97, Cys-76-Cys-83, and Cys-85-Cys-118. Asp-80 lines the heme pocket.

It belongs to the RBT5 family. In terms of assembly, homodimer. The possibility of a transient honotrimer assembly of the holo protein is not ruled out.

It localises to the secreted. In terms of biological role, secreted heme-binding protein involved in the utilization of iron from human hemoglobin during hyphal growth. May also play a role in non-hemoglobin iron utilization. Heme transfer occurs between PGA7, RBT5 and CSA2 supporting a model in which the 3 CFEM proteins cooperate in a heme-acquisition system and form a cross-cell wall heme-transfer cascade. The ability to acquire iron from host tissues is a major virulence factor of pathogenic microorganisms. In Candida albicans (strain SC5314 / ATCC MYA-2876) (Yeast), this protein is Secreted hemophore CSA2 (CSA2).